The chain runs to 430 residues: Mannan endo-1,4-beta-mannosidase (430 aa).

Residue Glu173 is the Proton donor of the active site. Glu269 functions as the Nucleophile in the catalytic mechanism. CBM10 domains follow at residues 357-390 and 395-424; these read SCGT…CVVA and SCNW…CIAA.

This sequence belongs to the glycosyl hydrolase 5 (cellulase A) family.

It catalyses the reaction Random hydrolysis of (1-&gt;4)-beta-D-mannosidic linkages in mannans, galactomannans and glucomannans.. Functionally, catalyzes the endo hydrolysis of beta-1,4-linked mannan, galactomannan and glucomannan. It is able to hydrolyze mannosidic linkages that are flanked by mannose or glucose. The chain is Mannan endo-1,4-beta-mannosidase from Cellvibrio japonicus (strain Ueda107) (Pseudomonas fluorescens subsp. cellulosa).